We begin with the raw amino-acid sequence, 188 residues long: Transcription factor FapR (188 aa).

The protein belongs to the FapR family.

Transcriptional factor involved in regulation of membrane lipid biosynthesis by repressing genes involved in fatty acid and phospholipid metabolism. This chain is Transcription factor FapR, found in Bacillus licheniformis (strain ATCC 14580 / DSM 13 / JCM 2505 / CCUG 7422 / NBRC 12200 / NCIMB 9375 / NCTC 10341 / NRRL NRS-1264 / Gibson 46).